We begin with the raw amino-acid sequence, 177 residues long: Protein GrpE (177 aa).

Belongs to the GrpE family. In terms of assembly, homodimer. K(+) serves as cofactor.

The protein localises to the cytoplasm. Participates actively in the response to hyperosmotic and heat shock by preventing the aggregation of stress-denatured proteins, in association with DnaK and GrpE. It is the nucleotide exchange factor for DnaK and may function as a thermosensor. Unfolded proteins bind initially to DnaJ; upon interaction with the DnaJ-bound protein, DnaK hydrolyzes its bound ATP, resulting in the formation of a stable complex. GrpE releases ADP from DnaK; ATP binding to DnaK triggers the release of the substrate protein, thus completing the reaction cycle. Several rounds of ATP-dependent interactions between DnaJ, DnaK and GrpE are required for fully efficient folding. In Thermus thermophilus (strain ATCC 27634 / DSM 579 / HB8), this protein is Protein GrpE.